We begin with the raw amino-acid sequence, 191 residues long: Large ribosomal subunit protein uL3 (191 aa).

The segment at 119–138 (AAHGSRFHRRPGSIGNREWP) is disordered.

Belongs to the universal ribosomal protein uL3 family. In terms of assembly, part of the 50S ribosomal subunit. Forms a cluster with proteins L14 and L19.

Its function is as follows. One of the primary rRNA binding proteins, it binds directly near the 3'-end of the 23S rRNA, where it nucleates assembly of the 50S subunit. In Helicobacter pylori (strain ATCC 700392 / 26695) (Campylobacter pylori), this protein is Large ribosomal subunit protein uL3 (rplC).